The sequence spans 203 residues: Recombination protein RecR (203 aa).

The C4-type zinc finger occupies 58–73 (CDYCGNLDIVSICNIC). The Toprim domain occupies 81–177 (STIAVVESVA…KISKLASGIP (97 aa)).

Belongs to the RecR family.

In terms of biological role, may play a role in DNA repair. It seems to be involved in an RecBC-independent recombinational process of DNA repair. It may act with RecF and RecO. This Orientia tsutsugamushi (strain Ikeda) (Rickettsia tsutsugamushi) protein is Recombination protein RecR.